The following is a 546-amino-acid chain: (-)-5-epieremophilene synthase STPS1 (546 aa).

The Mg(2+) site is built by D299, D303, D442, T446, and E450. The DDXXD motif motif lies at 299 to 303 (DDTYD).

Belongs to the terpene synthase family. Tpsa subfamily. As to quaternary structure, monomer. It depends on Mg(2+) as a cofactor. In terms of tissue distribution, highly expressed in leaves and at lower levels in flowers.

It carries out the reaction (2E,6E)-farnesyl diphosphate = (-)-5-epi-eremophilene + diphosphate. The protein operates within secondary metabolite biosynthesis; terpenoid biosynthesis. Functionally, sesquiterpene synthase that catalyzes the conversion of farnesyl diphosphate to (-)-5-epi-eremophilene. The chain is (-)-5-epieremophilene synthase STPS1 from Salvia miltiorrhiza (Chinese sage).